Consider the following 437-residue polypeptide: Ribosomal protein uS12 methylthiotransferase RimO (437 aa).

The region spanning 4-114 (PRVSFVSLGC…VMNAVHEVAP (111 aa)) is the MTTase N-terminal domain. Residues Cys-13, Cys-49, Cys-78, Cys-145, Cys-149, and Cys-152 each contribute to the [4Fe-4S] cluster site. The Radical SAM core domain maps to 131–369 (LTPRHYAYLK…MAKQQQISTN (239 aa)). The TRAM domain maps to 372–437 (KKKVGKRLPV…DAYDLHGTAV (66 aa)).

It belongs to the methylthiotransferase family. RimO subfamily. [4Fe-4S] cluster is required as a cofactor.

The protein resides in the cytoplasm. It carries out the reaction L-aspartate(89)-[ribosomal protein uS12]-hydrogen + (sulfur carrier)-SH + AH2 + 2 S-adenosyl-L-methionine = 3-methylsulfanyl-L-aspartate(89)-[ribosomal protein uS12]-hydrogen + (sulfur carrier)-H + 5'-deoxyadenosine + L-methionine + A + S-adenosyl-L-homocysteine + 2 H(+). In terms of biological role, catalyzes the methylthiolation of an aspartic acid residue of ribosomal protein uS12. The polypeptide is Ribosomal protein uS12 methylthiotransferase RimO (Brucella abortus (strain S19)).